Reading from the N-terminus, the 492-residue chain is N-succinylglutamate 5-semialdehyde dehydrogenase (492 aa).

Position 220–225 (220–225 (GSASTG)) interacts with NAD(+). Catalysis depends on residues Glu243 and Cys277.

This sequence belongs to the aldehyde dehydrogenase family. AstD subfamily.

The enzyme catalyses N-succinyl-L-glutamate 5-semialdehyde + NAD(+) + H2O = N-succinyl-L-glutamate + NADH + 2 H(+). It participates in amino-acid degradation; L-arginine degradation via AST pathway; L-glutamate and succinate from L-arginine: step 4/5. Functionally, catalyzes the NAD-dependent reduction of succinylglutamate semialdehyde into succinylglutamate. This Salmonella paratyphi B (strain ATCC BAA-1250 / SPB7) protein is N-succinylglutamate 5-semialdehyde dehydrogenase.